The sequence spans 130 residues: Large ribosomal subunit protein bL19 (130 aa).

Belongs to the bacterial ribosomal protein bL19 family.

Functionally, this protein is located at the 30S-50S ribosomal subunit interface and may play a role in the structure and function of the aminoacyl-tRNA binding site. This is Large ribosomal subunit protein bL19 from Burkholderia ambifaria (strain ATCC BAA-244 / DSM 16087 / CCUG 44356 / LMG 19182 / AMMD) (Burkholderia cepacia (strain AMMD)).